The primary structure comprises 172 residues: Ribosome maturation factor RimM (172 aa).

The PRC barrel domain occupies 96-168 (DGEFYYHEII…RVDVEILEGL (73 aa)).

The protein belongs to the RimM family. As to quaternary structure, binds ribosomal protein uS19.

It localises to the cytoplasm. An accessory protein needed during the final step in the assembly of 30S ribosomal subunit, possibly for assembly of the head region. Essential for efficient processing of 16S rRNA. May be needed both before and after RbfA during the maturation of 16S rRNA. It has affinity for free ribosomal 30S subunits but not for 70S ribosomes. This chain is Ribosome maturation factor RimM, found in Streptococcus pneumoniae serotype 4 (strain ATCC BAA-334 / TIGR4).